A 3390-amino-acid polypeptide reads, in one-letter code: Genome polyprotein (3390 aa).

The tract at residues 1-15 (MNNQRKKTGKPSINM) is interaction with host EXOC1. Topologically, residues 1-100 (MNNQRKKTGK…MLSIINKRKK (100 aa)) are cytoplasmic. Residues 37–72 (LLNGQGPMKLVMAFIAFLRFLAIPPTAGVLARWGTF) are hydrophobic; homodimerization of capsid protein C. Residues 101-114 (TSLCLMMIMPAALA) constitute a propeptide, ER anchor for the capsid protein C, removed in mature form by serine protease NS3. Residues 101–120 (TSLCLMMIMPAALAFHLTSR) traverse the membrane as a helical segment. Residues 121–243 (DGEPRMIVGK…VEKVETWALR (123 aa)) lie on the Extracellular side of the membrane. N-linked (GlcNAc...) asparagine; by host glycosylation occurs at Asn-183. The chain crosses the membrane as a helical span at residues 244-264 (HPGFTILALFLAHYIGTSLTQ). Lys-265 is a topological domain (cytoplasmic). The chain crosses the membrane as a helical span at residues 266–280 (VVIFILLMLVTPSMT). Residues 281–723 (MRCVGVGNRD…VHQIFGSAYT (443 aa)) lie on the Extracellular side of the membrane. 4 cysteine pairs are disulfide-bonded: Cys-283–Cys-310, Cys-340–Cys-401, Cys-354–Cys-385, and Cys-372–Cys-396. N-linked (GlcNAc...) asparagine; by host glycosylation occurs at Asn-347. The segment at 378-391 (DRGWGNGCGLFGKG) is fusion peptide. A glycan (N-linked (GlcNAc...) asparagine; by host) is linked at Asn-433. 2 disulfides stabilise this stretch: Cys-463–Cys-563 and Cys-580–Cys-611. The helical transmembrane segment at 724-744 (ALFSGVSWVMKIGIGVLLTWI) threads the bilayer. Residues 745–750 (GLNSKN) lie on the Cytoplasmic side of the membrane. The helical transmembrane segment at 751–771 (TSMSFSCIAIGIITLYLGAVV) threads the bilayer. Topologically, residues 772-1193 (QADMGCVINW…MIGSNASDRM (422 aa)) are extracellular. Cystine bridges form between Cys-777-Cys-788, Cys-828-Cys-916, Cys-952-Cys-996, Cys-1053-Cys-1102, Cys-1064-Cys-1086, and Cys-1085-Cys-1089. Residues Asn-903 and Asn-980 are each glycosylated (N-linked (GlcNAc...) asparagine; by host). N-linked (GlcNAc...) asparagine; by host glycans are attached at residues Asn-1132 and Asn-1188. A helical membrane pass occupies residues 1194 to 1218 (GMGVTYLALIATFKIQPFLALGFFL). The Cytoplasmic portion of the chain corresponds to 1219–1224 (RKLTSR). A helical transmembrane segment spans residues 1225–1243 (ENLLLGVGLAMATTLQLPE). The Lumenal portion of the chain corresponds to 1244-1267 (DIEQMANGIALGLMALKLITQFET). The helical transmembrane segment at 1268-1288 (YQLWTALISLTCSNTMFTLTV) threads the bilayer. Ala-1289 is a topological domain (cytoplasmic). The chain crosses the membrane as a helical span at residues 1290-1308 (WRTATLILAGVSLLPVCQS). The Lumenal segment spans residues 1309-1315 (SSMRKTD). A helical transmembrane segment spans residues 1316-1336 (WLPMAVAAMGVPPLPLFIFSL). Residues 1337 to 1344 (KDTLKRRS) lie on the Cytoplasmic side of the membrane. The chain crosses the membrane as a helical span at residues 1345–1365 (WPLNEGVMAVGLVSILASSLL). Residues 1366–1368 (RND) lie on the Lumenal side of the membrane. The helical transmembrane segment at 1369–1389 (VPMAGPLVAGGLLIACYVITG) threads the bilayer. At 1390–1443 (TSADLTVEKAADITWEEEAEQTGVSHNLMITVDDDGTMRIKDDETENILTVLLK) the chain is on the cytoplasmic side. Residues 1396–1435 (VEKAADITWEEEAEQTGVSHNLMITVDDDGTMRIKDDETE) are interacts with and activates NS3 protease. The helical intramembrane region spans 1444–1464 (TALLIVSGVFPYSIPATLLVW). The Cytoplasmic portion of the chain corresponds to 1465–2146 (HTWQKQTQRS…VEELPETMET (682 aa)). One can recognise a Peptidase S7 domain in the interval 1474 to 1651 (SGVLWDVPSP…NAEPDGPTPE (178 aa)). Catalysis depends on charge relay system; for serine protease NS3 activity residues His-1524, Asp-1548, and Ser-1608. In terms of domain architecture, Helicase ATP-binding spans 1654-1810 (EEMFKKRNLT…QSNAPIQDEE (157 aa)). Residues 1658–1661 (KKRN) are important for RNA-binding. 1667–1674 (LHPGSGKT) provides a ligand contact to ATP. The DEAH box signature appears at 1758–1761 (DEAH). A Helicase C-terminal domain is found at 1820–1986 (SGNEWITDFA…GIIPALFEPE (167 aa)). At Lys-1862 the chain carries N6-acetyllysine; by host. The helical transmembrane segment at 2147 to 2167 (LLLLGLMILLTGGAMLFLISG) threads the bilayer. Topologically, residues 2168–2169 (KG) are lumenal. The segment at residues 2170–2190 (IGKTSIGLICVIASSGMLWMA) is an intramembrane region (helical). A topological domain (lumenal) is located at residue Glu-2191. Residues 2192 to 2212 (IPLQWIASAIVLEFFMMVLLI) form a helical membrane-spanning segment. The Cytoplasmic segment spans residues 2213 to 2227 (PEPEKQRTPQDNQLA). A helical transmembrane segment spans residues 2228 to 2248 (YVVIGILTLAAIIAANEMGLL). Topologically, residues 2249–2273 (ETTKRDLGMSKEPGVVSPTSYLDVD) are lumenal. Residues 2274 to 2294 (LHPASAWTLYAVATTVITPML) constitute an intramembrane region (helical). At 2295–2305 (RHTIENSTANV) the chain is on the lumenal side. N-linked (GlcNAc...) asparagine; by host glycans are attached at residues Asn-2300 and Asn-2304. An intramembrane region (helical) is located at residues 2306-2326 (SLAAIANQAVVLMGLDKGWPI). At 2327 to 2346 (SKMDLGVPLLALGCYSQVNP) the chain is on the lumenal side. A helical transmembrane segment spans residues 2347–2367 (LTLTAAVLLLITHYAIIGPGL). Residues 2368–2412 (QAKATREAQKRTAAGIMKNPTVDGIMTIDLDPVIYDSKFEKQLGQ) are Cytoplasmic-facing. A helical transmembrane segment spans residues 2413-2433 (VMLLVLCAVQLLLMRTSWALC). Over 2434–2458 (EALTLATGPITTLWEGSPGKFWNTT) the chain is Lumenal. N-linked (GlcNAc...) asparagine; by host glycosylation occurs at Asn-2456. Residues 2459–2479 (IAVSMANIFRGSYLAGAGLAF) form a helical membrane-spanning segment. At 2480 to 3390 (SIMKSVGTGK…KEEESEGAIW (911 aa)) the chain is on the cytoplasmic side. An mRNA cap 0-1 NS5-type MT domain is found at 2492 to 2753 (TGSQGETLGE…DVDLGAGTRH (262 aa)). An S-adenosyl-L-methionine-binding site is contributed by Ser-2546. The residue at position 2546 (Ser-2546) is a Phosphoserine. The For 2'-O-MTase activity role is filled by Lys-2551. The SUMO-interacting motif motif lies at 2567-2570 (VIDL). Residues Gly-2576, Trp-2577, Thr-2594, Lys-2595, Asp-2621, and Val-2622 each coordinate S-adenosyl-L-methionine. Asp-2636 acts as the For 2'-O-MTase activity in catalysis. An S-adenosyl-L-methionine-binding site is contributed by Ile-2637. Residues Lys-2670 and Glu-2706 each act as for 2'-O-MTase activity in the active site. Position 2708 (Tyr-2708) interacts with S-adenosyl-L-methionine. Residues Glu-2927, His-2931, Cys-2936, and Cys-2939 each coordinate Zn(2+). Residues 3018–3168 (AMYADDTAGW…PIDDRFANAL (151 aa)) form the RdRp catalytic domain. Positions 3202, 3218, and 3337 each coordinate Zn(2+).

The protein in the N-terminal section; belongs to the class I-like SAM-binding methyltransferase superfamily. mRNA cap 0-1 NS5-type methyltransferase family. In terms of assembly, homodimer. Interacts (via N-terminus) with host EXOC1 (via C-terminus); this interaction results in EXOC1 degradation through the proteasome degradation pathway. Forms heterodimers with envelope protein E in the endoplasmic reticulum and Golgi. As to quaternary structure, homodimer; in the endoplasmic reticulum and Golgi. Interacts with protein prM. Interacts with non-structural protein 1. In terms of assembly, homodimer; Homohexamer when secreted. Interacts with envelope protein E. Interacts (via N-terminus) with serine protease NS3. As to quaternary structure, forms a heterodimer with serine protease NS3. May form homooligomers. In terms of assembly, forms a heterodimer with NS2B. Interacts with NS4B. Interacts with unphosphorylated RNA-directed RNA polymerase NS5; this interaction stimulates RNA-directed RNA polymerase NS5 guanylyltransferase activity. Interacts with host MAVS; this interaction inhibits the synthesis of IFN-beta. Interacts with host AUP1; the interaction occurs in the presence of Dengue virus NS4B and induces lipophagy which facilitates production of virus progeny particles. As to quaternary structure, interacts with serine protease NS3. In terms of assembly, homodimer. Interacts with host STAT2; this interaction inhibits the phosphorylation of the latter, and, when all viral proteins are present (polyprotein), targets STAT2 for degradation. Interacts with serine protease NS3. Post-translationally, specific enzymatic cleavages in vivo yield mature proteins. Cleavages in the lumen of endoplasmic reticulum are performed by host signal peptidase, whereas cleavages in the cytoplasmic side are performed by serine protease NS3. Signal cleavage at the 2K-4B site requires a prior NS3 protease-mediated cleavage at the 4A-2K site. Cleaved in post-Golgi vesicles by a host furin, releasing the mature small envelope protein M, and peptide pr. This cleavage is incomplete as up to 30% of viral particles still carry uncleaved prM. In terms of processing, N-glycosylated. Post-translationally, N-glycosylated. The excreted form is glycosylated and this is required for efficient secretion of the protein from infected cells. Acetylated by host KAT5. Acetylation modulates NS3 RNA-binding and unwinding activities and plays an important positive role for viral replication. In terms of processing, sumoylation of RNA-directed RNA polymerase NS5 increases NS5 protein stability allowing proper viral RNA replication. Post-translationally, phosphorylated on serines residues. This phosphorylation may trigger NS5 nuclear localization.

It is found in the virion. The protein localises to the host nucleus. The protein resides in the host cytoplasm. It localises to the host perinuclear region. Its subcellular location is the secreted. It is found in the virion membrane. The protein localises to the host endoplasmic reticulum membrane. The protein resides in the host mitochondrion. The catalysed reaction is Selective hydrolysis of -Xaa-Xaa-|-Yaa- bonds in which each of the Xaa can be either Arg or Lys and Yaa can be either Ser or Ala.. It carries out the reaction RNA(n) + a ribonucleoside 5'-triphosphate = RNA(n+1) + diphosphate. It catalyses the reaction a ribonucleoside 5'-triphosphate + H2O = a ribonucleoside 5'-diphosphate + phosphate + H(+). The enzyme catalyses ATP + H2O = ADP + phosphate + H(+). The catalysed reaction is a 5'-end (5'-triphosphoguanosine)-ribonucleoside in mRNA + S-adenosyl-L-methionine = a 5'-end (N(7)-methyl 5'-triphosphoguanosine)-ribonucleoside in mRNA + S-adenosyl-L-homocysteine. It carries out the reaction a 5'-end (N(7)-methyl 5'-triphosphoguanosine)-ribonucleoside in mRNA + S-adenosyl-L-methionine = a 5'-end (N(7)-methyl 5'-triphosphoguanosine)-(2'-O-methyl-ribonucleoside) in mRNA + S-adenosyl-L-homocysteine + H(+). Functionally, plays a role in virus budding by binding to the cell membrane and gathering the viral RNA into a nucleocapsid that forms the core of a mature virus particle. During virus entry, may induce genome penetration into the host cytoplasm after hemifusion induced by the surface proteins. Can migrate to the cell nucleus where it modulates host functions. Overcomes the anti-viral effects of host EXOC1 by sequestering and degrading the latter through the proteasome degradation pathway. Its function is as follows. Inhibits RNA silencing by interfering with host Dicer. In terms of biological role, prevents premature fusion activity of envelope proteins in trans-Golgi by binding to envelope protein E at pH6.0. After virion release in extracellular space, gets dissociated from E dimers. Acts as a chaperone for envelope protein E during intracellular virion assembly by masking and inactivating envelope protein E fusion peptide. prM is the only viral peptide matured by host furin in the trans-Golgi network probably to avoid catastrophic activation of the viral fusion activity in acidic Golgi compartment prior to virion release. prM-E cleavage is inefficient, and many virions are only partially matured. These uncleaved prM would play a role in immune evasion. Functionally, may play a role in virus budding. Exerts cytotoxic effects by activating a mitochondrial apoptotic pathway through M ectodomain. May display a viroporin activity. Its function is as follows. Binds to host cell surface receptor and mediates fusion between viral and cellular membranes. Envelope protein is synthesized in the endoplasmic reticulum in the form of heterodimer with protein prM. They play a role in virion budding in the ER, and the newly formed immature particle is covered with 60 spikes composed of heterodimer between precursor prM and envelope protein E. The virion is transported to the Golgi apparatus where the low pH causes dissociation of PrM-E heterodimers and formation of E homodimers. prM-E cleavage is inefficient, and many virions are only partially matured. These uncleaved prM would play a role in immune evasion. In terms of biological role, involved in immune evasion, pathogenesis and viral replication. Once cleaved off the polyprotein, is targeted to three destinations: the viral replication cycle, the plasma membrane and the extracellular compartment. Essential for viral replication. Required for formation of the replication complex and recruitment of other non-structural proteins to the ER-derived membrane structures. Excreted as a hexameric lipoparticle that plays a role against host immune response. Antagonizing the complement function. Binds to the host macrophages and dendritic cells. Inhibits signal transduction originating from Toll-like receptor 3 (TLR3). Disrupts the host endothelial glycocalyx layer of host pulmonary microvascular endothelial cells, inducing degradation of sialic acid and shedding of heparan sulfate proteoglycans. NS1 induces expression of sialidases, heparanase, and activates cathepsin L, which activates heparanase via enzymatic cleavage. These effects are probably linked to the endothelial hyperpermeability observed in severe dengue disease. Functionally, component of the viral RNA replication complex that functions in virion assembly and antagonizes the host immune response. Its function is as follows. Required cofactor for the serine protease function of NS3. May have membrane-destabilizing activity and form viroporins. In terms of biological role, displays three enzymatic activities: serine protease, NTPase and RNA helicase. NS3 serine protease, in association with NS2B, performs its autocleavage and cleaves the polyprotein at dibasic sites in the cytoplasm: C-prM, NS2A-NS2B, NS2B-NS3, NS3-NS4A, NS4A-2K and NS4B-NS5. NS3 RNA helicase binds RNA and unwinds dsRNA in the 3' to 5' direction. Regulates the ATPase activity of the NS3 helicase activity. NS4A allows NS3 helicase to conserve energy during unwinding. Plays a role in the inhibition of the host innate immune response. Interacts with host MAVS and thereby prevents the interaction between RIGI and MAVS. In turn, IFN-beta production is impaired. Interacts with host AUP1 which mediates induction of lipophagy in host cells and facilitates production of virus progeny particles. Functionally, functions as a signal peptide for NS4B and is required for the interferon antagonism activity of the latter. Its function is as follows. Induces the formation of ER-derived membrane vesicles where the viral replication takes place. Inhibits interferon (IFN)-induced host STAT1 phosphorylation and nuclear translocation, thereby preventing the establishment of cellular antiviral state by blocking the IFN-alpha/beta pathway. In terms of biological role, replicates the viral (+) and (-) RNA genome, and performs the capping of genomes in the cytoplasm. NS5 methylates viral RNA cap at guanine N-7 and ribose 2'-O positions. Besides its role in RNA genome replication, also prevents the establishment of cellular antiviral state by blocking the interferon-alpha/beta (IFN-alpha/beta) signaling pathway. Inhibits host TYK2 and STAT2 phosphorylation, thereby preventing activation of JAK-STAT signaling pathway. This Dengue virus type 3 (strain Martinique/1243/1999) (DENV-3) protein is Genome polyprotein (pol).